The primary structure comprises 239 residues: 3,4-dihydroxyphthalate decarboxylase (239 aa).

Catalysis depends on glutamate 84, which acts as the Proton donor/acceptor. A divalent metal cation contacts are provided by glutamate 84, histidine 103, histidine 105, and histidine 171.

The protein belongs to the aldolase class II family. It depends on a divalent metal cation as a cofactor.

It catalyses the reaction 3,4-dihydroxyphthalate + H(+) = 3,4-dihydroxybenzoate + CO2. Its pathway is xenobiotic degradation; phthalate degradation. Its function is as follows. Catalyzes the decarboxylation of 3,4-dihydroxyphthalate to protocatechuate (3,4-dihydroxybenzoate) during phthalate metabolism. This is 3,4-dihydroxyphthalate decarboxylase from Terrabacter sp. (strain DBF63).